Consider the following 522-residue polypeptide: Putative thymidine phosphorylase (522 aa).

It belongs to the thymidine/pyrimidine-nucleoside phosphorylase family. Type 2 subfamily.

It catalyses the reaction thymidine + phosphate = 2-deoxy-alpha-D-ribose 1-phosphate + thymine. The chain is Putative thymidine phosphorylase from Albidiferax ferrireducens (strain ATCC BAA-621 / DSM 15236 / T118) (Rhodoferax ferrireducens).